We begin with the raw amino-acid sequence, 192 residues long: UPF0312 protein YE1254 (192 aa).

The first 23 residues, 1-23 (MFNKTLLGLTVGALMFTAGSAVA), serve as a signal peptide directing secretion.

The protein belongs to the UPF0312 family. Type 1 subfamily.

The protein localises to the periplasm. The sequence is that of UPF0312 protein YE1254 from Yersinia enterocolitica serotype O:8 / biotype 1B (strain NCTC 13174 / 8081).